We begin with the raw amino-acid sequence, 307 residues long: D-alanine--D-alanine ligase (307 aa).

The region spanning 101 to 301 (KTVMRAAGVS…FGELVRWMVE (201 aa)) is the ATP-grasp domain. ATP is bound at residue 127-182 (PLTPPYVVKPIAEGSSMGVIIVRDERSHPPQILASDEWVYGEEVLAETYVAGRELT). The Mg(2+) site is built by Asp-251, Glu-268, and Asn-270.

Belongs to the D-alanine--D-alanine ligase family. It depends on Mg(2+) as a cofactor. Mn(2+) is required as a cofactor.

Its subcellular location is the cytoplasm. The catalysed reaction is 2 D-alanine + ATP = D-alanyl-D-alanine + ADP + phosphate + H(+). It participates in cell wall biogenesis; peptidoglycan biosynthesis. In terms of biological role, cell wall formation. This is D-alanine--D-alanine ligase from Methylorubrum extorquens (strain PA1) (Methylobacterium extorquens).